We begin with the raw amino-acid sequence, 176 residues long: 4-hydroxylaminobenzoate lyase (176 aa).

Belongs to the PnbB family.

The enzyme catalyses 4-hydroxylaminobenzoate + H2O + H(+) = 3,4-dihydroxybenzoate + NH4(+). In terms of biological role, lyase involved in the degradation of nitroaromatic compounds. Catalyzes the conversion of 4-hydroxylaminobenzoate to 3,4-dihydroxybenzoate (protocatechuate). Required for the catabolism of 4-nitrotoluene. The protein is 4-hydroxylaminobenzoate lyase of Pseudomonas putida (Arthrobacter siderocapsulatus).